Reading from the N-terminus, the 356-residue chain is Red-sensitive opsin-2 (356 aa).

Over 1–48 the chain is Extracellular; sequence MAEWANAAFAARRRGDETTRDNAFSYTNSNNTRDPFEGPNYHIAPRWV. The N-linked (GlcNAc...) asparagine glycan is linked to N30. Residues 49-73 form a helical membrane-spanning segment; that stretch reads YNVATVWMFFVVVASTFTNGLVLVA. Topologically, residues 74–85 are cytoplasmic; it reads TAKFKKLRHPLN. The chain crosses the membrane as a helical span at residues 86 to 111; that stretch reads WILVNLAIADLGETLFASTISVINQV. Topologically, residues 112–125 are extracellular; that stretch reads FGYFILGHPMCIFE. An intrachain disulfide couples C122 to C199. The chain crosses the membrane as a helical span at residues 126-145; the sequence is GYTVSVCGIAGLWSLTVISW. The Cytoplasmic segment spans residues 146–164; it reads ERWVVVCKPFGNVKFDGKW. A helical transmembrane segment spans residues 165–188; sequence ASAGIIFSWVWAAVWCAPPIFGWS. The Extracellular segment spans residues 189–214; that stretch reads RYWPHGLKTSCGPDVFGGNEDPGVQS. The chain crosses the membrane as a helical span at residues 215–242; it reads YMLVLMITCCILPLAIIILCYIAVFLAI. Residues 243–264 are Cytoplasmic-facing; it reads HAVAQQQKDSESTQKAEKEVSR. The chain crosses the membrane as a helical span at residues 265-288; that stretch reads MVVVMILAFCLCWGPYTAFACFAA. At 289–296 the chain is on the extracellular side; that stretch reads ANPGYAFH. The chain crosses the membrane as a helical span at residues 297–321; sequence PLAAAMPAYFAKSATIYNPIIYVFM. At K308 the chain carries N6-(retinylidene)lysine. Residues 322 to 356 are Cytoplasmic-facing; sequence NRQFRVCIMQLFGKKVDDGSEVSTSKTEVSSVAPA.

Belongs to the G-protein coupled receptor 1 family. Opsin subfamily. In terms of processing, phosphorylated on some or all of the serine and threonine residues present in the C-terminal region.

The protein localises to the membrane. Its function is as follows. Visual pigments are the light-absorbing molecules that mediate vision. They consist of an apoprotein, opsin, covalently linked to cis-retinal. This is Red-sensitive opsin-2 (opn1lw2) from Danio rerio (Zebrafish).